Consider the following 407-residue polypeptide: 1-deoxy-D-xylulose 5-phosphate reductoisomerase (407 aa).

NADPH is bound by residues T25, G26, S27, I28, N53, and N136. Residue K137 participates in 1-deoxy-D-xylulose 5-phosphate binding. An NADPH-binding site is contributed by E138. Residue D162 coordinates Mn(2+). Residues S163, E164, S188, and H211 each coordinate 1-deoxy-D-xylulose 5-phosphate. E164 lines the Mn(2+) pocket. G217 contributes to the NADPH binding site. Residues S224, N229, K230, and E233 each contribute to the 1-deoxy-D-xylulose 5-phosphate site. E233 lines the Mn(2+) pocket.

The protein belongs to the DXR family. It depends on Mg(2+) as a cofactor. Mn(2+) serves as cofactor.

It catalyses the reaction 2-C-methyl-D-erythritol 4-phosphate + NADP(+) = 1-deoxy-D-xylulose 5-phosphate + NADPH + H(+). It participates in isoprenoid biosynthesis; isopentenyl diphosphate biosynthesis via DXP pathway; isopentenyl diphosphate from 1-deoxy-D-xylulose 5-phosphate: step 1/6. Catalyzes the NADPH-dependent rearrangement and reduction of 1-deoxy-D-xylulose-5-phosphate (DXP) to 2-C-methyl-D-erythritol 4-phosphate (MEP). This chain is 1-deoxy-D-xylulose 5-phosphate reductoisomerase, found in Nitrobacter winogradskyi (strain ATCC 25391 / DSM 10237 / CIP 104748 / NCIMB 11846 / Nb-255).